Consider the following 495-residue polypeptide: tRNA-guanine(15) transglycosylase (495 aa).

Residue aspartate 83 is the Nucleophile of the active site. Aspartate 118 lines the substrate pocket. Positions 273 and 278 each coordinate Zn(2+).

The protein belongs to the archaeosine tRNA-ribosyltransferase family. Zn(2+) is required as a cofactor.

The catalysed reaction is guanosine(15) in tRNA + 7-cyano-7-deazaguanine = 7-cyano-7-carbaguanosine(15) in tRNA + guanine. It functions in the pathway tRNA modification; archaeosine-tRNA biosynthesis. Its function is as follows. Exchanges the guanine residue with 7-cyano-7-deazaguanine (preQ0) at position 15 in the dihydrouridine loop (D-loop) of archaeal tRNAs. This chain is tRNA-guanine(15) transglycosylase, found in Pyrobaculum aerophilum (strain ATCC 51768 / DSM 7523 / JCM 9630 / CIP 104966 / NBRC 100827 / IM2).